The following is a 338-amino-acid chain: Lipoate-protein ligase A (338 aa).

In terms of domain architecture, BPL/LPL catalytic spans 29–216; sequence PATQRVLFLW…AFFAHYGERV (188 aa). ATP-binding positions include Arg71, 76-79, and Lys134; that span reads GAVF. Lys134 contributes to the (R)-lipoate binding site.

Belongs to the LplA family. Monomer.

It is found in the cytoplasm. It carries out the reaction L-lysyl-[lipoyl-carrier protein] + (R)-lipoate + ATP = N(6)-[(R)-lipoyl]-L-lysyl-[lipoyl-carrier protein] + AMP + diphosphate + H(+). Its pathway is protein modification; protein lipoylation via exogenous pathway; protein N(6)-(lipoyl)lysine from lipoate: step 1/2. The protein operates within protein modification; protein lipoylation via exogenous pathway; protein N(6)-(lipoyl)lysine from lipoate: step 2/2. Its function is as follows. Catalyzes both the ATP-dependent activation of exogenously supplied lipoate to lipoyl-AMP and the transfer of the activated lipoyl onto the lipoyl domains of lipoate-dependent enzymes. The chain is Lipoate-protein ligase A from Salmonella paratyphi C (strain RKS4594).